We begin with the raw amino-acid sequence, 634 residues long: DNA-directed RNA polymerase subunit gamma (634 aa).

Residues cysteine 74, cysteine 76, cysteine 89, and cysteine 92 each coordinate Zn(2+). Residues aspartate 471, aspartate 473, and aspartate 475 each coordinate Mg(2+).

The protein belongs to the RNA polymerase beta' chain family. RpoC1 subfamily. In terms of assembly, in cyanobacteria the RNAP catalytic core is composed of 2 alpha, 1 beta, 1 beta', 1 gamma and 1 omega subunit. When a sigma factor is associated with the core the holoenzyme is formed, which can initiate transcription. Requires Mg(2+) as cofactor. The cofactor is Zn(2+).

It catalyses the reaction RNA(n) + a ribonucleoside 5'-triphosphate = RNA(n+1) + diphosphate. DNA-dependent RNA polymerase catalyzes the transcription of DNA into RNA using the four ribonucleoside triphosphates as substrates. This is DNA-directed RNA polymerase subunit gamma from Synechococcus sp. (strain RCC307).